We begin with the raw amino-acid sequence, 272 residues long: Putative hydro-lyase BBta_2883 (272 aa).

Belongs to the D-glutamate cyclase family.

This Bradyrhizobium sp. (strain BTAi1 / ATCC BAA-1182) protein is Putative hydro-lyase BBta_2883.